The chain runs to 91 residues: Cell division topological specificity factor (91 aa).

It belongs to the MinE family.

Prevents the cell division inhibition by proteins MinC and MinD at internal division sites while permitting inhibition at polar sites. This ensures cell division at the proper site by restricting the formation of a division septum at the midpoint of the long axis of the cell. This chain is Cell division topological specificity factor, found in Desulfitobacterium hafniense (strain DSM 10664 / DCB-2).